We begin with the raw amino-acid sequence, 60 residues long: CAMPATH-1 antigen (60 aa).

The first 24 residues, methionine 1 to threonine 24, serve as a signal peptide directing secretion. An N-linked (GlcNAc...) asparagine glycan is attached at asparagine 27. Serine 35 carries the GPI-anchor amidated serine lipid modification. Residues alanine 36 to serine 60 constitute a propeptide, removed in mature form. Residue asparagine 39 is glycosylated (N-linked (GlcNAc...) asparagine).

It localises to the cell membrane. Its function is as follows. May play a role in carrying and orienting carbohydrate, as well as having a more specific role. The chain is CAMPATH-1 antigen (CD52) from Macaca fascicularis (Crab-eating macaque).